The following is a 65-amino-acid chain: Small, acid-soluble spore protein Tlp (65 aa).

This sequence belongs to the Tlp family.

Its subcellular location is the spore core. In Bacillus anthracis (strain A0248), this protein is Small, acid-soluble spore protein Tlp.